Reading from the N-terminus, the 483-residue chain is Cobyric acid synthase (483 aa).

Positions 248 to 434 constitute a GATase cobBQ-type domain; the sequence is ALRVVVPVLP…LHGLFEQPSA (187 aa). Cys-329 acts as the Nucleophile in catalysis. The active site involves His-426.

This sequence belongs to the CobB/CobQ family. CobQ subfamily.

It participates in cofactor biosynthesis; adenosylcobalamin biosynthesis. Functionally, catalyzes amidations at positions B, D, E, and G on adenosylcobyrinic A,C-diamide. NH(2) groups are provided by glutamine, and one molecule of ATP is hydrogenolyzed for each amidation. The chain is Cobyric acid synthase from Ectopseudomonas mendocina (strain ymp) (Pseudomonas mendocina).